The chain runs to 489 residues: Potassium voltage-gated channel subfamily A member 7 (489 aa).

A helical membrane pass occupies residues 176–196 (VLAVVSVLVILVSIVVFCLET). Asn-224 is a glycosylation site (N-linked (GlcNAc...) asparagine). The chain crosses the membrane as a helical span at residues 242–262 (FFVVETLCICWFSFELLVRLV). Cys-264 carries S-palmitoyl cysteine lipidation. A helical transmembrane segment spans residues 274 to 294 (VMNLIDFVAILPYFVALGTEL). A helical; Voltage-sensor transmembrane segment spans residues 309-328 (ILRVIRLVRVFRIFKLSRHS). A helical membrane pass occupies residues 345-365 (LGLLIFFLFIGVVLFSSAVYF). The short motif at 391–396 (TVGYGD) is the Selectivity filter element. Residues 406–426 (IVGSLCAIAGVLTISLPVPVI) traverse the membrane as a helical segment.

The protein belongs to the potassium channel family. A (Shaker) (TC 1.A.1.2) subfamily. Kv1.7/KCNA7 sub-subfamily. In terms of assembly, heterotetramer of potassium channel proteins. As to expression, detected in heart, skeletal muscle, brain, and pancreatic islet cells.

The protein localises to the membrane. It catalyses the reaction K(+)(in) = K(+)(out). Mediates the voltage-dependent potassium ion permeability of excitable membranes. Assuming opened or closed conformations in response to the voltage difference across the membrane, the protein forms a potassium-selective channel through which potassium ions may pass in accordance with their electrochemical gradient. Channels formed by isoform 1 inactivate faster than channels formed by isoform 2. The polypeptide is Potassium voltage-gated channel subfamily A member 7 (Kcna7) (Mus musculus (Mouse)).